An 855-amino-acid polypeptide reads, in one-letter code: Sucrose synthase 5 (855 aa).

Positions 279–758 (SIFNIVIFSI…GLQRICECYT (480 aa)) are GT-B glycosyltransferase.

This sequence belongs to the glycosyltransferase 1 family. Plant sucrose synthase subfamily. Predominantly expressed in roots, flowers and immature seeds.

The protein resides in the cytoplasm. The protein localises to the membrane. The catalysed reaction is an NDP-alpha-D-glucose + D-fructose = a ribonucleoside 5'-diphosphate + sucrose + H(+). In terms of biological role, sucrose-cleaving enzyme that provides UDP-glucose and fructose for various metabolic pathways. In Oryza sativa subsp. japonica (Rice), this protein is Sucrose synthase 5 (SUS5).